The chain runs to 320 residues: Cytochrome f (320 aa).

The N-terminal stretch at 1–35 is a signal peptide; it reads MQNRNTFSWVKEQMTRSIFVSMMIYIITRASISNA. Residues Y36, C56, C59, and H60 each coordinate heme. Residues 286–306 form a helical membrane-spanning segment; it reads IQGLFLFLASVILAQIFLVLK.

The protein belongs to the cytochrome f family. As to quaternary structure, the 4 large subunits of the cytochrome b6-f complex are cytochrome b6, subunit IV (17 kDa polypeptide, petD), cytochrome f and the Rieske protein, while the 4 small subunits are PetG, PetL, PetM and PetN. The complex functions as a dimer. The cofactor is heme.

It localises to the plastid. Its subcellular location is the chloroplast thylakoid membrane. Its function is as follows. Component of the cytochrome b6-f complex, which mediates electron transfer between photosystem II (PSII) and photosystem I (PSI), cyclic electron flow around PSI, and state transitions. The chain is Cytochrome f from Amborella trichopoda.